The primary structure comprises 671 residues: Kinesin-like protein KIF2C (671 aa).

The globular stretch occupies residues 1–200 (MIDIDDVAAI…CNPLTVTDPI (200 aa)). Positions 37–58 (QKRKSVNSKIPGPKEGLRSRST) are disordered. Phosphoserine; by AURKB is present on Ser-41. Positions 44–47 (SKIP) match the Microtubule tip localization signal motif. Phosphoserine is present on residues Ser-55, Ser-57, Ser-61, Ser-112, Ser-121, Ser-133, and Ser-138. The disordered stretch occupies residues 115–138 (AEEQAHSTRSTSSANPGNSVRRKS). Over residues 121–132 (STRSTSSANPGN) the composition is skewed to polar residues. Positions 153–184 (EKRAQNSEIRIKRAQEYDNSFPNWEFARMIKE) are negative regulator of microtubule-binding. The Kinesin motor domain occupies 204-534 (RICVCVRKRP…LRYADRVKEL (331 aa)). Residues Arg-210 and 294-301 (GQTGSGKT) contribute to the ATP site. Position 465 is a phosphoserine (Ser-465). The tract at residues 533–568 (ELSPHSGPSGEQAVQMETEEMDASSHGASLTGNEEE) is disordered. A coiled-coil region spans residues 566–601 (EEEELSSQMSSFNEAMTQIRELEERAMEELREIIQQ). Phosphoserine is present on Ser-576.

This sequence belongs to the TRAFAC class myosin-kinesin ATPase superfamily. Kinesin family. MCAK/KIF2 subfamily. In terms of assembly, interacts with CENPH. Interacts with MTUS2/TIP150; the interaction is direct. Interacts with MAPRE1; the interaction is direct, regulated by phosphorylation and is probably required for targeting to growing microtubule plus ends. Interacts with KIF18B at microtubule tips; this interaction increases the affinity of both partners for microtubule plus ends and is required for robust microtubule depolymerization. Phosphorylation by AURKA or AURKB strongly reduces KIF18B-binding. In terms of processing, phosphorylation by AURKB, regulates association with centromeres and kinetochores and the microtubule depolymerization activity. Ubiquitinated. Testis. Localized to the meiotically active cells of the seminiferous epithelia in the testis.

It localises to the cytoplasm. Its subcellular location is the cytoskeleton. It is found in the nucleus. The protein localises to the chromosome. The protein resides in the centromere. It localises to the kinetochore. In terms of biological role, in complex with KIF18B, constitutes the major microtubule plus-end depolymerizing activity in mitotic cells. Regulates the turnover of microtubules at the kinetochore and functions in chromosome segregation during mitosis. Plays a role in chromosome congression and is required for the lateral to end-on conversion of the chromosome-microtubule attachment. The chain is Kinesin-like protein KIF2C (Kif2c) from Rattus norvegicus (Rat).